The following is a 518-amino-acid chain: Xylose import ATP-binding protein XylG (518 aa).

2 ABC transporter domains span residues 6-245 (LQMN…VGRE) and 262-507 (FEAR…LSQP). Residue 38 to 45 (GENGAGKS) coordinates ATP.

The protein belongs to the ABC transporter superfamily. Xylose importer (TC 3.A.1.2.4) family. As to quaternary structure, the complex is composed of two ATP-binding proteins (XylG), two transmembrane proteins (XylH) and a solute-binding protein (XylF).

It is found in the cell inner membrane. It carries out the reaction D-xylose(out) + ATP + H2O = D-xylose(in) + ADP + phosphate + H(+). Its function is as follows. Part of the ABC transporter complex XylFGH involved in xylose import. Responsible for energy coupling to the transport system. The chain is Xylose import ATP-binding protein XylG from Pseudomonas fluorescens (strain Pf0-1).